A 749-amino-acid polypeptide reads, in one-letter code: Phototropin (749 aa).

Positions Pro7–Gly80 constitute a PAS 1 domain. FMN-binding positions include Asn56–Gln61, Arg74, Asn89, Asn99, and Gln120. Cys57 is modified (S-4a-FMN cysteine). The 55-residue stretch at Glu81 to Asn135 folds into the PAC 1 domain. Residues Val200–Gly273 form the PAS 2 domain. A PAC 2 domain is found at Ser274–Val328. In terms of domain architecture, Protein kinase spans Phe404 to Phe712. Residues Leu410–Val418 and Lys433 contribute to the ATP site. Asp529 (proton acceptor) is an active-site residue. Disordered regions lie at residues Lys563–Gly591 and Pro729–Tyr749. Positions Lys713–Tyr749 constitute an AGC-kinase C-terminal domain. Positions Lys734–Tyr749 are enriched in low complexity.

The protein belongs to the protein kinase superfamily. AGC Ser/Thr protein kinase family. Requires FMN as cofactor. Post-translationally, autophosphorylated in response to blue light irradiation. In terms of processing, 2 molecules of FMN bind covalently to cysteines after exposure to blue light and are reversed in the dark. As to expression, expressed in gametes, pre-gametes and gametes generated by pre-gametes (at protein level).

It is found in the membrane. It carries out the reaction L-seryl-[protein] + ATP = O-phospho-L-seryl-[protein] + ADP + H(+). The catalysed reaction is L-threonyl-[protein] + ATP = O-phospho-L-threonyl-[protein] + ADP + H(+). Functionally, protein kinase that acts as a blue light photoreceptor. Required for non-photochemical quenching (NPQ), a mechanism that converts and dissipates the harmful excess absorbed light energy into heat and protect the photosynthetic apparatus from photo-oxidative damage. Controls the energy-dependent chlorophyll fluorescence quenching (qE) activity of chlorophyll excited states by inducing the expression of the qE effector protein LHCSR3 in high light intensities. This is Phototropin from Chlamydomonas reinhardtii (Chlamydomonas smithii).